An 86-amino-acid chain; its full sequence is Large ribosomal subunit protein uL24 (86 aa).

It belongs to the universal ribosomal protein uL24 family. Part of the 50S ribosomal subunit.

In terms of biological role, one of two assembly initiator proteins, it binds directly to the 5'-end of the 23S rRNA, where it nucleates assembly of the 50S subunit. Its function is as follows. One of the proteins that surrounds the polypeptide exit tunnel on the outside of the subunit. The chain is Large ribosomal subunit protein uL24 from Bdellovibrio bacteriovorus (strain ATCC 15356 / DSM 50701 / NCIMB 9529 / HD100).